Consider the following 641-residue polypeptide: XK-related protein 6 (641 aa).

Disordered stretches follow at residues 20–47 (LDEAVGSGGEEDGEPGGGGCGGGGDGSE) and 84–120 (RSAAADGGDQPLQPPAAPGAGRQPPTPSAARPEPPPP). The segment covering 34–46 (PGGGGCGGGGDGS) has biased composition (gly residues). Residues 107–120 (PPTPSAARPEPPPP) show a composition bias toward pro residues. The next 7 membrane-spanning stretches (helical) occupy residues 130-150 (LWIVLALLVFFGDVGTDLWLA), 159-179 (YVYFGLTLFFVLVPSLLVQSL), 318-338 (TLPCVSSVTSLMSLAWVLASY), 372-392 (VISFALFASIFQLYFGIFVVV), 413-433 (WEEILFNMVVGIVYIFCWFNV), 442-462 (MFAYYTIVLTENAALTFLWYF), and 473-493 (AVPALCCVFISFVAGIAMMLL).

The protein belongs to the XK family.

Its subcellular location is the cell membrane. The polypeptide is XK-related protein 6 (Homo sapiens (Human)).